The chain runs to 348 residues: N-acetyl-gamma-glutamyl-phosphate reductase (348 aa).

C150 is an active-site residue.

It belongs to the NAGSA dehydrogenase family. Type 1 subfamily.

It localises to the cytoplasm. It catalyses the reaction N-acetyl-L-glutamate 5-semialdehyde + phosphate + NADP(+) = N-acetyl-L-glutamyl 5-phosphate + NADPH + H(+). It functions in the pathway amino-acid biosynthesis; L-arginine biosynthesis; N(2)-acetyl-L-ornithine from L-glutamate: step 3/4. In terms of biological role, catalyzes the NADPH-dependent reduction of N-acetyl-5-glutamyl phosphate to yield N-acetyl-L-glutamate 5-semialdehyde. In Symbiobacterium thermophilum (strain DSM 24528 / JCM 14929 / IAM 14863 / T), this protein is N-acetyl-gamma-glutamyl-phosphate reductase.